The sequence spans 444 residues: Methylenetetrahydrofolate--tRNA-(uracil-5-)-methyltransferase TrmFO (444 aa).

10 to 15 (GAGLAG) contributes to the FAD binding site.

This sequence belongs to the MnmG family. TrmFO subfamily. FAD serves as cofactor.

Its subcellular location is the cytoplasm. It catalyses the reaction uridine(54) in tRNA + (6R)-5,10-methylene-5,6,7,8-tetrahydrofolate + NADH + H(+) = 5-methyluridine(54) in tRNA + (6S)-5,6,7,8-tetrahydrofolate + NAD(+). It carries out the reaction uridine(54) in tRNA + (6R)-5,10-methylene-5,6,7,8-tetrahydrofolate + NADPH + H(+) = 5-methyluridine(54) in tRNA + (6S)-5,6,7,8-tetrahydrofolate + NADP(+). Its function is as follows. Catalyzes the folate-dependent formation of 5-methyl-uridine at position 54 (M-5-U54) in all tRNAs. The protein is Methylenetetrahydrofolate--tRNA-(uracil-5-)-methyltransferase TrmFO of Streptococcus equi subsp. equi (strain 4047).